The primary structure comprises 541 residues: Glucose-6-phosphate isomerase (541 aa).

E346 serves as the catalytic Proton donor. Active-site residues include H377 and K506.

The protein belongs to the GPI family.

It is found in the cytoplasm. The catalysed reaction is alpha-D-glucose 6-phosphate = beta-D-fructose 6-phosphate. It functions in the pathway carbohydrate biosynthesis; gluconeogenesis. The protein operates within carbohydrate degradation; glycolysis; D-glyceraldehyde 3-phosphate and glycerone phosphate from D-glucose: step 2/4. Its function is as follows. Catalyzes the reversible isomerization of glucose-6-phosphate to fructose-6-phosphate. The protein is Glucose-6-phosphate isomerase of Rhizobium etli (strain ATCC 51251 / DSM 11541 / JCM 21823 / NBRC 15573 / CFN 42).